We begin with the raw amino-acid sequence, 743 residues long: Mitochondrial exoribonuclease DSS-1 (743 aa).

The transit peptide at 1–67 (MTPRRVAKLV…KELLHLQRSL (67 aa)) directs the protein to the mitochondrion. The region spanning 186–542 (THNPAYAIDS…VHHQLKVWLW (357 aa)) is the RNB domain. The segment at 320–357 (VGNQHHHTERESTQASPAKREEGKKGMVASGGTSSCRP) is disordered. Basic and acidic residues predominate over residues 325 to 344 (HHTERESTQASPAKREEGKK).

It belongs to the RNR ribonuclease family. As to quaternary structure, component of the mitochondrial 3' processome (MPsome) complex composed at least of terminal uridylyltransferase KRET1/TUT1, 3'-5' exonuclease DSS1, MPSS1, MPSS2 and MPSS3. Within the complex, interacts with KRET1 and MPSS2. Component of the mitochondrial degradosome complex composed at least of 3'-5' exonuclease DSS1 and helicase SUV3. Within the complex, interacts with helicase SUV3.

Its subcellular location is the mitochondrion. The catalysed reaction is Exonucleolytic cleavage in the 3'- to 5'-direction to yield nucleoside 5'-phosphates.. 3'-5'exoribonuclease which is involved in the post-transcriptional processing, editing and degradation of mitochondrial RNAs, including mRNAs, rRNAs and guided RNAs (gRNA). As part of the mitochondrial 3' processome (MPsome), involved in the maturation of guided RNA (gRNA) precursors by catalyzing the processive 3'-5' degradation of uridylated gRNA precursors. Plays a role in the degradation of 12S rRNA processing intermediates and maturation by-products. This chain is Mitochondrial exoribonuclease DSS-1, found in Trypanosoma brucei brucei.